The sequence spans 581 residues: Putative ABC transporter ATP-binding protein MM_1996 (581 aa).

The ABC transporter 1 domain maps to 10-250 (IEIRDLWYTY…LEVFHRLGLR (241 aa)). Position 44–51 (44–51 (GPTGCGKS)) interacts with ATP. The segment at 287–309 (GDYPASPGRKEKTSSPGWSSENN) is disordered. Over residues 300-309 (SSPGWSSENN) the composition is skewed to polar residues. Residues 313 to 541 (VSVRDLWSGY…IDILRKASLT (229 aa)) form the ABC transporter 2 domain. 346–353 (GTNGSGKS) is an ATP binding site.

The protein belongs to the ABC transporter superfamily.

The protein localises to the cell membrane. Functionally, probably part of an ABC transporter complex. Responsible for energy coupling to the transport system. The polypeptide is Putative ABC transporter ATP-binding protein MM_1996 (Methanosarcina mazei (strain ATCC BAA-159 / DSM 3647 / Goe1 / Go1 / JCM 11833 / OCM 88) (Methanosarcina frisia)).